The following is a 753-amino-acid chain: Catalase-peroxidase (753 aa).

A cross-link (tryptophyl-tyrosyl-methioninium (Trp-Tyr) (with M-264)) is located at residues 90–238 (WHSAGTYRVT…LASSHMGLIY (149 aa)). His-91 acts as the Proton acceptor in catalysis. The interval 196–220 (SEGQEGHEGHGVVQGDESKKQHTDI) is disordered. A cross-link (tryptophyl-tyrosyl-methioninium (Tyr-Met) (with W-90)) is located at residues 238 to 264 (YVNPEGPDGIPDPVASAKDIRVTFGRM). His-279 provides a ligand contact to heme b.

It belongs to the peroxidase family. Peroxidase/catalase subfamily. Homodimer or homotetramer. Requires heme b as cofactor. Post-translationally, formation of the three residue Trp-Tyr-Met cross-link is important for the catalase, but not the peroxidase activity of the enzyme.

It is found in the cytoplasm. It carries out the reaction H2O2 + AH2 = A + 2 H2O. It catalyses the reaction 2 H2O2 = O2 + 2 H2O. With respect to regulation, inhibited by KCN. In terms of biological role, bifunctional enzyme with both catalase and broad-spectrum peroxidase activity. The protein is Catalase-peroxidase of Neurospora crassa (strain ATCC 24698 / 74-OR23-1A / CBS 708.71 / DSM 1257 / FGSC 987).